Here is a 257-residue protein sequence, read N- to C-terminus: Thiazole synthase (257 aa).

The active-site Schiff-base intermediate with DXP is lysine 100. Residues glycine 161, alanine 187–glycine 188, and asparagine 209–threonine 210 each bind 1-deoxy-D-xylulose 5-phosphate.

Belongs to the ThiG family. As to quaternary structure, homotetramer. Forms heterodimers with either ThiH or ThiS.

Its subcellular location is the cytoplasm. The catalysed reaction is [ThiS sulfur-carrier protein]-C-terminal-Gly-aminoethanethioate + 2-iminoacetate + 1-deoxy-D-xylulose 5-phosphate = [ThiS sulfur-carrier protein]-C-terminal Gly-Gly + 2-[(2R,5Z)-2-carboxy-4-methylthiazol-5(2H)-ylidene]ethyl phosphate + 2 H2O + H(+). The protein operates within cofactor biosynthesis; thiamine diphosphate biosynthesis. Functionally, catalyzes the rearrangement of 1-deoxy-D-xylulose 5-phosphate (DXP) to produce the thiazole phosphate moiety of thiamine. Sulfur is provided by the thiocarboxylate moiety of the carrier protein ThiS. In vitro, sulfur can be provided by H(2)S. This Pelagibacter ubique (strain HTCC1062) protein is Thiazole synthase.